The sequence spans 96 residues: Co-chaperonin GroES (96 aa).

It belongs to the GroES chaperonin family. In terms of assembly, heptamer of 7 subunits arranged in a ring. Interacts with the chaperonin GroEL.

Its subcellular location is the cytoplasm. Its function is as follows. Together with the chaperonin GroEL, plays an essential role in assisting protein folding. The GroEL-GroES system forms a nano-cage that allows encapsulation of the non-native substrate proteins and provides a physical environment optimized to promote and accelerate protein folding. GroES binds to the apical surface of the GroEL ring, thereby capping the opening of the GroEL channel. This is Co-chaperonin GroES from Hahella chejuensis (strain KCTC 2396).